Here is a 637-residue protein sequence, read N- to C-terminus: Probable ATP-binding protein YheS (637 aa).

2 consecutive ABC transporter domains span residues 2 to 246 (IVFS…AQQQ) and 313 to 527 (LKME…KQEN). ATP contacts are provided by residues 34 to 41 (GKNGCGKS) and 345 to 352 (GRNGAGKS). The tract at residues 523–559 (QKQENQTDEAPKENANSAQARKDQKRREAELRAQTQP) is disordered. Residues 542–553 (ARKDQKRREAEL) show a composition bias toward basic and acidic residues.

It belongs to the ABC transporter superfamily. ABCF family. YheS subfamily.

Its function is as follows. Genetic data indicate it may be involved in ribosome assembly or function. The polypeptide is Probable ATP-binding protein YheS (yheS) (Escherichia coli O157:H7).